The chain runs to 347 residues: Extracellular exo-alpha-(1-&gt;5)-L-arabinofuranosidase ArbA (347 aa).

The first 31 residues, 1-31 (MPTHHPITRQHWHHSWLSALALLCASLACGA), serve as a signal peptide directing secretion. Asp-35 is a substrate binding site. The active-site Proton acceptor is the Asp-38. Residues 90–92 (DGH), 115–116 (GK), Asn-155, Ser-175, and Glu-221 contribute to the substrate site. Glu-221 functions as the Proton donor in the catalytic mechanism. His-291 serves as a coordination point for Ca(2+). Residue Gln-316 coordinates substrate.

This sequence belongs to the glycosyl hydrolase 43 family. As to quaternary structure, homodimer.

It localises to the secreted. The enzyme catalyses Hydrolysis of terminal non-reducing alpha-L-arabinofuranoside residues in alpha-L-arabinosides.. It participates in glycan metabolism; L-arabinan degradation. Involved in the degradation of arabinan and is a key enzyme in the complete degradation of the plant cell wall. Catalyzes the cleavage of the terminal alpha-(1-&gt;5)-arabinofuranosyl bonds of linear arabinan and carboxymethylarabinan to produce almost exclusively arabinotriose. The chain is Extracellular exo-alpha-(1-&gt;5)-L-arabinofuranosidase ArbA (arbA) from Cellvibrio japonicus (strain Ueda107) (Pseudomonas fluorescens subsp. cellulosa).